Here is a 683-residue protein sequence, read N- to C-terminus: Elongation factor G-like protein (683 aa).

The 263-residue stretch at 5-267 (QNVRSAALIG…YLGDIGVSPE (263 aa)) folds into the tr-type G domain. GTP-binding positions include 14 to 21 (GHNGSGKS), 73 to 77 (DTPGF), and 127 to 130 (NQMD).

Belongs to the TRAFAC class translation factor GTPase superfamily. Classic translation factor GTPase family. EF-G/EF-2 subfamily.

In Thermotoga maritima (strain ATCC 43589 / DSM 3109 / JCM 10099 / NBRC 100826 / MSB8), this protein is Elongation factor G-like protein.